The following is a 129-amino-acid chain: Transcriptional activator protein (129 aa).

Over residues 1–12 (MRSSSPSQPPSI) the composition is skewed to low complexity. Residues 1–23 (MRSSSPSQPPSIKKAHRQAKKRA) are disordered. A compositionally biased stretch (basic residues) spans 13 to 23 (KKAHRQAKKRA). A Nuclear localization signal motif is present at residues 13–28 (KKAHRQAKKRAIRRRR). A zinc finger lies at 33–50 (CGCSIYFHIDCAGHGFTH). A disordered region spans residues 73-117 (LFQDKPSRGHAIHQDQDIQRPNPVQPQPQESIGSPQSIPELPSLD). Polar residues predominate over residues 99 to 109 (QPQESIGSPQS). The segment at 115 to 129 (SLDDIDDSFWVELFS) is transactivation.

The protein belongs to the geminiviridae transcriptional activator protein family. In terms of assembly, monomer. Homodimer. Homooligomer. Self-interaction correlates with nuclear localization and efficient activation of transcription. Monomers suppress local silencing by interacting with and inactivating host adenosine kinase 2 (ADK2) in the cytoplasm. Interacts with and inhibits host SNF1 kinase. Binds to ssDNA. In terms of processing, phosphorylated.

The protein resides in the host nucleus. Its subcellular location is the host cytoplasm. In terms of biological role, strong activator of the late viral genes promoters. Enhances the expression of the capsid protein and nuclear shuttle protein. Acts as a suppressor of RNA-mediated gene silencing, also known as post-transcriptional gene silencing (PTGS), a mechanism of plant viral defense that limits the accumulation of viral RNAs. Suppresses the host RNA silencing by inhibiting adenosine kinase 2 (ADK2), a kinase involved in a general methylation pathway. Also suppresses the host basal defense by interacting with and inhibiting SNF1 kinase, a key regulator of cell metabolism implicated in innate antiviral defense. Determines pathogenicity. The protein is Transcriptional activator protein of Solanum tuberosum (Potato).